Here is a 148-residue protein sequence, read N- to C-terminus: UPF0591 membrane protein C15E1.02c (148 aa).

Transmembrane regions (helical) follow at residues Ala-14–Met-34, Leu-80–Ala-102, and Ile-122–Gly-142.

Belongs to the UPF0591 family.

The protein localises to the membrane. This is UPF0591 membrane protein C15E1.02c from Schizosaccharomyces pombe (strain 972 / ATCC 24843) (Fission yeast).